The chain runs to 642 residues: Zinc finger protein 14 (642 aa).

The 73-residue stretch at 4 to 76 (VSFEDVAVNF…MVERLCESRR (73 aa)) folds into the KRAB domain. A C2H2-type 1 zinc finger spans residues 103-125 (HECSFCGRDFIHHSSLNRHMRSH). Residues 141–163 (CKCKAVGKTFSYHHCFRKHERTH) form a C2H2-type 2; degenerate zinc finger. Residues 169–191 (YECKQCGKAFIYYQPFQRHERTH) form a C2H2-type 3 zinc finger. The C2H2-type 4; atypical zinc-finger motif lies at 197 to 217 (YECKQCGKTFIYYQSFQKHAH). 15 C2H2-type zinc fingers span residues 223-245 (YECK…KRTH), 251-273 (YECK…ERTH), 279-301 (YKCK…KRTH), 307-329 (YECK…VIIH), 335-357 (YKCK…ERTH), 363-385 (YECK…ERTH), 391-413 (YECK…ETTH), 419-441 (YECK…ERTH), 447-469 (YECK…ERSH), 475-497 (YECK…ERTH), 503-525 (YECK…EKIH), 531-553 (FECK…ERTH), 559-581 (YQCK…ERTH), 587-609 (YRCK…ERSH), and 615-637 (YECK…ERTH).

Belongs to the krueppel C2H2-type zinc-finger protein family.

It is found in the nucleus. May be involved in transcriptional regulation. The chain is Zinc finger protein 14 (ZNF14) from Homo sapiens (Human).